Consider the following 498-residue polypeptide: Protein spinster homolog 3 (498 aa).

12 consecutive transmembrane segments (helical) span residues 49 to 71 (IAVA…IAGV), 87 to 107 (GLLQ…FGYL), 114 to 134 (KLIM…SSFV), 148 to 168 (LVGT…GDLF), 175 to 195 (LMIS…YIIG), 207 to 227 (WALR…VFLI), 260 to 280 (FVWS…LAFW), 309 to 329 (YIFG…GTCI), 343 to 363 (LICA…IVLA), 373 to 393 (FIAI…DILL), 407 to 427 (LQIM…IGAI), and 451 to 471 (LLCP…SLYI).

This sequence belongs to the major facilitator superfamily. Spinster (TC 2.A.1.49) family.

It localises to the membrane. Functionally, sphingolipid transporter. The chain is Protein spinster homolog 3 (spns3) from Danio rerio (Zebrafish).